A 326-amino-acid chain; its full sequence is MQSFAKITAQGTYVPEKVMDNNDFEKIVETSDEWIQQRTGIIERRIADENEYTSDLSYKAVLDLQEKYQVDLTDVDMIINTTLTPDYKTPSVASYVQAQLGLKNAGAIDINAACAGFTYGLNLANGLITSGQNKKILVIGSETLSKITDYNDRSTCILFGDGAGAFLVEYDKEEMSFIASNAGSDGLKGHNLYCTELSEEMFSDDLENHGYIVQNGRGVYKWAVGNVPNIIHEVLNQSNYSIEDLNWFVPHSANARMIESICEKANIETDKALKSLKYYGNTSSATIPLSIDLAIKEGKIKKDDLILLVGFGGGLAYASTLIRWTI.

Residues Cys-114 and His-251 contribute to the active site. Positions 252–256 are ACP-binding; that stretch reads SANAR. Asn-281 is an active-site residue.

Belongs to the thiolase-like superfamily. FabH family. Homodimer.

The protein resides in the cytoplasm. The catalysed reaction is malonyl-[ACP] + acetyl-CoA + H(+) = 3-oxobutanoyl-[ACP] + CO2 + CoA. It functions in the pathway lipid metabolism; fatty acid biosynthesis. Its function is as follows. Catalyzes the condensation reaction of fatty acid synthesis by the addition to an acyl acceptor of two carbons from malonyl-ACP. Catalyzes the first condensation reaction which initiates fatty acid synthesis and may therefore play a role in governing the total rate of fatty acid production. Possesses both acetoacetyl-ACP synthase and acetyl transacylase activities. Its substrate specificity determines the biosynthesis of branched-chain and/or straight-chain of fatty acids. The sequence is that of Beta-ketoacyl-[acyl-carrier-protein] synthase III 2 from Staphylococcus epidermidis (strain ATCC 12228 / FDA PCI 1200).